Reading from the N-terminus, the 817-residue chain is U3 small nucleolar RNA-associated protein 13 (817 aa).

WD repeat units lie at residues 59–100 (EDEQ…RSMK), 102–139 (SSPS…ITHS), 142–187 (GHGG…HTLQ), 191–233 (SAVR…KCKL), 238–280 (PVNQ…VLKR), 386–425 (GHED…CKFD), 432–476 (GHSA…ASMD), 489–528 (AHEK…LEAT), 531–572 (NHKR…KTLE), 573–614 (GHTN…KTLD), 616–654 (HNNR…EIEE), and 664–705 (EQEQ…LGES).

In terms of assembly, interacts with snoRNA U3. Interacts with MPP10. Component of the ribosomal small subunit (SSU) processome composed of at least 40 protein subunits and snoRNA U3.

It localises to the nucleus. Its subcellular location is the nucleolus. Its function is as follows. Involved in nucleolar processing of pre-18S ribosomal RNA. The sequence is that of U3 small nucleolar RNA-associated protein 13 (UTP13) from Saccharomyces cerevisiae (strain ATCC 204508 / S288c) (Baker's yeast).